A 358-amino-acid polypeptide reads, in one-letter code: MSRAAGLPRLSWFAGLTWFAGGSTGAGCAAHPALAGLTAGARCPAYAAISASTARPAATALPAVAASTARPAATAGTTPATGASGSARPTDAAGMADLARPGVVATHAVRTLGTTGSRAIGLCPCQPLDCPRSPQATPNLGSMGRSLDGPQWRRARVRLCGRWWRRSNTTRGASPRPPSTCRGDNVSMIELEVHQADVTKLELDAITNAANTRLRHAGGVAAAIARAGGPELQRESTEKAPIGLGEAVETTAGDMPARYVIHAATMELGGPTSGEIITAATAATLRKADELGCRSLALVAFGTGVGGFPLDDAARLMVGAVRRHRPGSLQRVVFAVHGDAAERAFSAAIQAGEDTARR.

Residues 70–88 are compositionally biased toward low complexity; the sequence is RPAATAGTTPATGASGSAR. The interval 70–93 is disordered; it reads RPAATAGTTPATGASGSARPTDAA. The region spanning 178 to 353 is the Macro domain; sequence PSTCRGDNVS…AFSAAIQAGE (176 aa).

This is an uncharacterized protein from Mycobacterium bovis (strain ATCC BAA-935 / AF2122/97).